Reading from the N-terminus, the 407-residue chain is Betaine--homocysteine S-methyltransferase 1 (407 aa).

A Hcy-binding domain is found at 11–314 (KGILERLNAG…YHIRAIAEEL (304 aa)). An N6-succinyllysine mark is found at Lys-40, Lys-93, and Lys-98. Cys-217 serves as a coordination point for Zn(2+). Lys-232 and Lys-241 each carry N6-succinyllysine. Zn(2+) contacts are provided by Cys-299 and Cys-300. The residue at position 330 (Ser-330) is a Phosphoserine. Lys-340 and Lys-377 each carry N6-succinyllysine.

Homotetramer. Zn(2+) serves as cofactor.

It localises to the cytoplasm. The protein localises to the cytosol. Its subcellular location is the nucleus. It catalyses the reaction L-homocysteine + glycine betaine = N,N-dimethylglycine + L-methionine. The protein operates within amine and polyamine degradation; betaine degradation; sarcosine from betaine: step 1/2. It participates in amino-acid biosynthesis; L-methionine biosynthesis via de novo pathway; L-methionine from L-homocysteine (BhmT route): step 1/1. Involved in the regulation of homocysteine metabolism. Converts betaine and homocysteine to dimethylglycine and methionine, respectively. This reaction is also required for the irreversible oxidation of choline. This is Betaine--homocysteine S-methyltransferase 1 (Bhmt) from Mus musculus (Mouse).